Here is a 533-residue protein sequence, read N- to C-terminus: CTP synthase (533 aa).

Residues 1 to 269 (MKKNLKILVI…HEILSSKLNI (269 aa)) form an amidoligase domain region. Serine 16 is a binding site for CTP. Residue serine 16 participates in UTP binding. Residues 17-22 (GIGKGV) and aspartate 73 contribute to the ATP site. Residues aspartate 73 and glutamate 143 each contribute to the Mg(2+) site. Residues 150-152 (DME), 190-195 (KSKPTQ), and lysine 226 contribute to the CTP site. UTP-binding positions include 190–195 (KSKPTQ) and lysine 226. The Glutamine amidotransferase type-1 domain maps to 304–533 (YAELDDSYAS…LFLGLIKACI (230 aa)). Glycine 355 contacts L-glutamine. The active-site Nucleophile; for glutamine hydrolysis is the cysteine 382. L-glutamine is bound by residues 383-386 (LGLQ), glutamate 406, and arginine 466. Active-site residues include histidine 511 and glutamate 513.

The protein belongs to the CTP synthase family. Homotetramer.

It catalyses the reaction UTP + L-glutamine + ATP + H2O = CTP + L-glutamate + ADP + phosphate + 2 H(+). The enzyme catalyses L-glutamine + H2O = L-glutamate + NH4(+). The catalysed reaction is UTP + NH4(+) + ATP = CTP + ADP + phosphate + 2 H(+). The protein operates within pyrimidine metabolism; CTP biosynthesis via de novo pathway; CTP from UDP: step 2/2. Its activity is regulated as follows. Allosterically activated by GTP, when glutamine is the substrate; GTP has no effect on the reaction when ammonia is the substrate. The allosteric effector GTP functions by stabilizing the protein conformation that binds the tetrahedral intermediate(s) formed during glutamine hydrolysis. Inhibited by the product CTP, via allosteric rather than competitive inhibition. In terms of biological role, catalyzes the ATP-dependent amination of UTP to CTP with either L-glutamine or ammonia as the source of nitrogen. Regulates intracellular CTP levels through interactions with the four ribonucleotide triphosphates. The chain is CTP synthase from Borreliella afzelii (strain PKo) (Borrelia afzelii).